Consider the following 182-residue polypeptide: Ribosome maturation factor RimM (182 aa).

Positions 103–182 (EDEFYWRELF…RIEVDWDPAF (80 aa)) constitute a PRC barrel domain.

The protein belongs to the RimM family. As to quaternary structure, binds ribosomal protein uS19.

Its subcellular location is the cytoplasm. Its function is as follows. An accessory protein needed during the final step in the assembly of 30S ribosomal subunit, possibly for assembly of the head region. Essential for efficient processing of 16S rRNA. May be needed both before and after RbfA during the maturation of 16S rRNA. It has affinity for free ribosomal 30S subunits but not for 70S ribosomes. In Vibrio cholerae serotype O1 (strain ATCC 39315 / El Tor Inaba N16961), this protein is Ribosome maturation factor RimM.